Consider the following 402-residue polypeptide: Acetate kinase (402 aa).

Position 10 (Asn10) interacts with Mg(2+). Lys17 contributes to the ATP binding site. Substrate is bound at residue Arg89. Catalysis depends on Asp148, which acts as the Proton donor/acceptor. Residues 208–212 (HLGNG), 283–285 (DCR), and 334–338 (GIGEN) contribute to the ATP site. Glu389 contributes to the Mg(2+) binding site.

Belongs to the acetokinase family. Homodimer. It depends on Mg(2+) as a cofactor. Requires Mn(2+) as cofactor.

It is found in the cytoplasm. It carries out the reaction acetate + ATP = acetyl phosphate + ADP. It participates in metabolic intermediate biosynthesis; acetyl-CoA biosynthesis; acetyl-CoA from acetate: step 1/2. Catalyzes the formation of acetyl phosphate from acetate and ATP. Can also catalyze the reverse reaction. This Actinobacillus pleuropneumoniae serotype 7 (strain AP76) protein is Acetate kinase.